Reading from the N-terminus, the 170-residue chain is Large ribosomal subunit protein uL11 (170 aa).

Belongs to the universal ribosomal protein uL11 family. Part of the ribosomal stalk of the 50S ribosomal subunit. Interacts with L10 and the large rRNA to form the base of the stalk. L10 forms an elongated spine to which L12 dimers bind in a sequential fashion forming a multimeric L10(L12)X complex.

In terms of biological role, forms part of the ribosomal stalk which helps the ribosome interact with GTP-bound translation factors. This Saccharolobus islandicus (strain M.16.27) (Sulfolobus islandicus) protein is Large ribosomal subunit protein uL11.